The following is a 1097-amino-acid chain: DNA-directed RNA polymerase subunit beta (1097 aa).

A disordered region spans residues Asp1073–Asp1097.

This sequence belongs to the RNA polymerase beta chain family. As to quaternary structure, in cyanobacteria the RNAP catalytic core is composed of 2 alpha, 1 beta, 1 beta', 1 gamma and 1 omega subunit. When a sigma factor is associated with the core the holoenzyme is formed, which can initiate transcription.

It carries out the reaction RNA(n) + a ribonucleoside 5'-triphosphate = RNA(n+1) + diphosphate. In terms of biological role, DNA-dependent RNA polymerase catalyzes the transcription of DNA into RNA using the four ribonucleoside triphosphates as substrates. The protein is DNA-directed RNA polymerase subunit beta of Synechococcus sp. (strain CC9311).